Reading from the N-terminus, the 295-residue chain is Ribosomal RNA small subunit methyltransferase A (295 aa).

The S-adenosyl-L-methionine site is built by asparagine 29, leucine 31, glycine 56, glutamate 77, aspartate 102, and asparagine 128.

Belongs to the class I-like SAM-binding methyltransferase superfamily. rRNA adenine N(6)-methyltransferase family. RsmA subfamily.

The protein resides in the cytoplasm. It carries out the reaction adenosine(1518)/adenosine(1519) in 16S rRNA + 4 S-adenosyl-L-methionine = N(6)-dimethyladenosine(1518)/N(6)-dimethyladenosine(1519) in 16S rRNA + 4 S-adenosyl-L-homocysteine + 4 H(+). In terms of biological role, specifically dimethylates two adjacent adenosines (A1518 and A1519) in the loop of a conserved hairpin near the 3'-end of 16S rRNA in the 30S particle. May play a critical role in biogenesis of 30S subunits. In Listeria monocytogenes serotype 4a (strain HCC23), this protein is Ribosomal RNA small subunit methyltransferase A.